The chain runs to 276 residues: NADPH-dependent 7-cyano-7-deazaguanine reductase (276 aa).

83 to 85 (IES) provides a ligand contact to substrate. 85–86 (SK) lines the NADPH pocket. C184 functions as the Thioimide intermediate in the catalytic mechanism. D191 (proton donor) is an active-site residue. Position 223–224 (223–224 (HE)) interacts with substrate. 252–253 (RG) lines the NADPH pocket.

The protein belongs to the GTP cyclohydrolase I family. QueF type 2 subfamily. In terms of assembly, homodimer.

The protein localises to the cytoplasm. The catalysed reaction is 7-aminomethyl-7-carbaguanine + 2 NADP(+) = 7-cyano-7-deazaguanine + 2 NADPH + 3 H(+). Its pathway is tRNA modification; tRNA-queuosine biosynthesis. In terms of biological role, catalyzes the NADPH-dependent reduction of 7-cyano-7-deazaguanine (preQ0) to 7-aminomethyl-7-deazaguanine (preQ1). This is NADPH-dependent 7-cyano-7-deazaguanine reductase from Pseudomonas syringae pv. tomato (strain ATCC BAA-871 / DC3000).